A 307-amino-acid polypeptide reads, in one-letter code: Estrogen receptor (307 aa).

The segment at residues 1–43 is a DNA-binding region (nuclear receptor); it reads GHNDYMCPATNQCTIDKNRRKSCQACRLRKCYEVGMMKGGIRK. Residues 7–31 form an NR C4-type zinc finger; sequence CPATNQCTIDKNRRKSCQACRLRKC. The segment at 44 to 95 is hinge; the sequence is DRRGGRILKHKRQREEHDNRNAGAIVERRSPNLWPSPLMITHNKKNSPALSL. In terms of domain architecture, NR LBD spans 96–307; that stretch reads TADQIVSALL…HFRHMSNKGM (212 aa).

Belongs to the nuclear hormone receptor family. NR3 subfamily. Binds DNA as a homodimer. Can form a heterodimer with ER-beta.

The protein resides in the nucleus. The steroid hormones and their receptors are involved in the regulation of eukaryotic gene expression and affect cellular proliferation and differentiation in target tissues. The protein is Estrogen receptor (ESR1) of Aspidoscelis uniparens (Desert grassland whiptail lizard).